A 76-amino-acid polypeptide reads, in one-letter code: Alpha/kappa-conotoxin-like fe14.2 (76 aa).

An N-terminal signal peptide occupies residues 1–24 (MPSVRSVTCCCLLWMMLSVQLVTP). The propeptide occupies 25 to 39 (GSPGTAQLSGQRTAR). 2 disulfides stabilise this stretch: cysteine 46-cysteine 61 and cysteine 50-cysteine 63. The residue at position 64 (arginine 64) is an Arginine amide. Residues 65–76 (GKRDVVSSSMAV) constitute a propeptide that is removed on maturation.

It belongs to the conotoxin J superfamily. In terms of tissue distribution, expressed by the venom duct.

Its subcellular location is the secreted. In terms of biological role, highly inhibits both nicotinic acetylcholine receptors (neuronal (alpha-3/beta-4) and muscular (alpha-1/beta-1/epsilon/delta) subtypes) and the voltage-gated potassium channel Kv1.6/KCNA6 subtype. In Conus ferrugineus (Cone snail), this protein is Alpha/kappa-conotoxin-like fe14.2.